The following is a 423-amino-acid chain: Methionine aminopeptidase 2 (423 aa).

Positions 1–17 (MTDVIDAKPEEAKKVPP) are enriched in basic and acidic residues. Positions 1–89 (MTDVIDAKPE…IQPYKDDNAY (89 aa)) are disordered. Over residues 18 to 29 (EVEDEDSGDESA) the composition is skewed to acidic residues. The segment covering 41-54 (KKKKKKKKPKKKKK) has biased composition (basic residues). His-176 serves as a coordination point for substrate. A divalent metal cation is bound by residues Asp-196, Asp-207, and His-276. His-284 contributes to the substrate binding site. Glu-309 and Glu-404 together coordinate a divalent metal cation.

This sequence belongs to the peptidase M24A family. Methionine aminopeptidase eukaryotic type 2 subfamily. Requires Co(2+) as cofactor. Zn(2+) serves as cofactor. Mn(2+) is required as a cofactor. The cofactor is Fe(2+).

The protein resides in the cytoplasm. The catalysed reaction is Release of N-terminal amino acids, preferentially methionine, from peptides and arylamides.. Cotranslationally removes the N-terminal methionine from nascent proteins. The N-terminal methionine is often cleaved when the second residue in the primary sequence is small and uncharged (Met-Ala-, Cys, Gly, Pro, Ser, Thr, or Val). This chain is Methionine aminopeptidase 2, found in Schizophyllum commune (strain H4-8 / FGSC 9210) (Split gill fungus).